The primary structure comprises 640 residues: F-box protein MET30 (640 aa).

Over residues 1 to 19 (MRRERQRMMSFEDKDKDDL) the composition is skewed to basic and acidic residues. The interval 1-84 (MRRERQRMMS…ATNDSGTRVQ (84 aa)) is disordered. The tract at residues 1–299 (MRRERQRMMS…KGHCRIQEFK (299 aa)) is necessary to mediate nuclear localization. 2 stretches are compositionally biased toward polar residues: residues 45–56 (TGSSDDLAQGSS) and 64–82 (ATRS…SGTR). Ser67 carries the post-translational modification Phosphoserine. Residues 180 to 225 (KIDFISILPQELSLKILSYLDCQSLCNATRVCRKWQKLADDDRVWY) are interaction with SKP1/CBF3D. The tract at residues 180 to 277 (KIDFISILPQ…TQTTRPWKVI (98 aa)) is important for mediating homomultimerization. An F-box domain is found at 181-227 (IDFISILPQELSLKILSYLDCQSLCNATRVCRKWQKLADDDRVWYHM). The segment at 277 to 640 (IYRERFKVES…VKMYKFDLND (364 aa)) is interaction with MET4. WD repeat units follow at residues 300–328 (GHMD…GIWD), 340–368 (GHSD…RVWN), 380–408 (GHSD…KVWH), 419–449 (GHTE…RMWD), 461–499 (GHVG…TMTD), 509–538 (NEQE…KLWD), 550–578 (GHVE…KVWD), and 607–635 (DKVA…KMYK). The span at 481–495 (ATDNTSDGSSPQDDP) shows a compositional bias: polar residues. The tract at residues 481-516 (ATDNTSDGSSPQDDPTMTDGADESDTPSNEQETVLD) is disordered.

This sequence belongs to the WD repeat MET30/SCONB/SCON-2 family. In terms of assembly, homomultimer. Interacts with CDC53 and SKP1/CBF3D to form the E3 ubiquitin ligase complex SCF(Met30). Interacts with MET4.

The protein resides in the cytoplasm. It is found in the nucleus. It participates in protein modification; protein ubiquitination. Its function is as follows. Substrate-recognition component of the SCF(Met30) complex, an E3 ubiquitin ligase complex that mediates the ubiquitination and subsequent proteasomal degradation of target proteins. Negatively regulates sulfur amino acids biosynthesis genes expression. Controls cell cycle function (being required for the G1/S transition and M-phase but not the S-phase), sulfur metabolism, and methionine biosynthesis as part of the SCF(Met30) complex. Required for the efficient binding of CDC45 and MCM proteins to origins of replication. Required for efficient expression of G1 cyclins. The SCF(Met30) complex catalyzes ubiquitination and degradation of the Cdk-inhibitory kinase SWE1. Involved in the S-adenosylmethionine (AdoMet)-mediated inhibition of the transcription function of MET4. The SCF(Met30) complex mediates ubiquitination and subsequent degradation of MET4 and the cellular response to cadmium. The SCF(Met30) complex acts as an inhibitor of autophagy by promoting ubiquitination and degradation of ATG9 in normal conditions. This chain is F-box protein MET30, found in Saccharomyces cerevisiae (strain ATCC 204508 / S288c) (Baker's yeast).